We begin with the raw amino-acid sequence, 195 residues long: Imidazoleglycerol-phosphate dehydratase (195 aa).

This sequence belongs to the imidazoleglycerol-phosphate dehydratase family.

The protein localises to the cytoplasm. The catalysed reaction is D-erythro-1-(imidazol-4-yl)glycerol 3-phosphate = 3-(imidazol-4-yl)-2-oxopropyl phosphate + H2O. Its pathway is amino-acid biosynthesis; L-histidine biosynthesis; L-histidine from 5-phospho-alpha-D-ribose 1-diphosphate: step 6/9. The sequence is that of Imidazoleglycerol-phosphate dehydratase from Leuconostoc mesenteroides subsp. mesenteroides (strain ATCC 8293 / DSM 20343 / BCRC 11652 / CCM 1803 / JCM 6124 / NCDO 523 / NBRC 100496 / NCIMB 8023 / NCTC 12954 / NRRL B-1118 / 37Y).